A 218-amino-acid polypeptide reads, in one-letter code: Peptide methionine sulfoxide reductase A2 (218 aa).

Positions Met-1–Pro-19 are enriched in polar residues. Positions Met-1–Lys-30 are disordered. Ser-205 carries the post-translational modification Phosphoserine.

Belongs to the MsrA Met sulfoxide reductase family.

It localises to the cytoplasm. The protein localises to the cytosol. The enzyme catalyses L-methionyl-[protein] + [thioredoxin]-disulfide + H2O = L-methionyl-(S)-S-oxide-[protein] + [thioredoxin]-dithiol. It catalyses the reaction [thioredoxin]-disulfide + L-methionine + H2O = L-methionine (S)-S-oxide + [thioredoxin]-dithiol. With respect to regulation, activated during dark in short day conditions. Its function is as follows. Catalyzes the reduction of methionine sulfoxide (MetSO) to methionine in proteins. Plays a protective role against oxidative stress by restoring activity to proteins that have been inactivated by methionine oxidation. Prevents cellular oxidative damage in long nights. MSRA family specifically reduces the MetSO S-enantiomer. This chain is Peptide methionine sulfoxide reductase A2 (MRSA2), found in Arabidopsis thaliana (Mouse-ear cress).